Consider the following 410-residue polypeptide: Serine hydroxymethyltransferase (410 aa).

Residues Leu119 and 123-125 each bind (6S)-5,6,7,8-tetrahydrofolate; that span reads GHL. Lys228 is subject to N6-(pyridoxal phosphate)lysine. 351–353 serves as a coordination point for (6S)-5,6,7,8-tetrahydrofolate; the sequence is SPF.

Belongs to the SHMT family. As to quaternary structure, homodimer. Pyridoxal 5'-phosphate is required as a cofactor.

The protein resides in the cytoplasm. It catalyses the reaction (6R)-5,10-methylene-5,6,7,8-tetrahydrofolate + glycine + H2O = (6S)-5,6,7,8-tetrahydrofolate + L-serine. It participates in one-carbon metabolism; tetrahydrofolate interconversion. Its pathway is amino-acid biosynthesis; glycine biosynthesis; glycine from L-serine: step 1/1. Functionally, catalyzes the reversible interconversion of serine and glycine with tetrahydrofolate (THF) serving as the one-carbon carrier. This reaction serves as the major source of one-carbon groups required for the biosynthesis of purines, thymidylate, methionine, and other important biomolecules. Also exhibits THF-independent aldolase activity toward beta-hydroxyamino acids, producing glycine and aldehydes, via a retro-aldol mechanism. This is Serine hydroxymethyltransferase from Clostridium perfringens (strain ATCC 13124 / DSM 756 / JCM 1290 / NCIMB 6125 / NCTC 8237 / Type A).